A 540-amino-acid chain; its full sequence is Lysosomal cobalamin transport escort protein LMBD1 (540 aa).

Residues 1 to 10 (MATPGAASAE) lie on the Extracellular side of the membrane. Residues 11–31 (LVIGWCIFGLLLLAILAFCWI) traverse the membrane as a helical segment. The Cytoplasmic segment spans residues 32-50 (YVRKYQSRRESEVVSTITA). The helical transmembrane segment at 51–71 (IFSLAIALITSALLPVDIFLV) threads the bilayer. Topologically, residues 72–100 (SYMKNQNGTFKDWANANVSRQIEDTVLYG) are extracellular. 2 N-linked (GlcNAc...) asparagine glycosylation sites follow: Asn-78 and Asn-88. A helical transmembrane segment spans residues 101-121 (YYTLYSVILFCVFFWIPFVYF). The Cytoplasmic portion of the chain corresponds to 122 to 144 (YYEEKDDDDTSKCTQIKTALKYT). The helical transmembrane segment at 145 to 165 (LGFVVICALLLLVGAFVPLNV) threads the bilayer. Over 166–188 (PNNKNSTEWEKVKFLFEELGSSH) the chain is Extracellular. Asn-170 is a glycosylation site (N-linked (GlcNAc...) asparagine). A helical transmembrane segment spans residues 189-209 (GLAALSFSISSLTLIGMLAAI). Residues 210-305 (TYTAYGMSAL…KFCGALRPLK (96 aa)) lie on the Cytoplasmic side of the membrane. Positions 232–235 (YERL) match the YERL motif; mediates interaction with adapter protein complex 2 and is essential for its function in clathrin-mediated endocytosis of INSR motif. Thr-238 carries the post-translational modification Phosphothreonine. The WTKF motif; mediates interaction with adapter protein complex 2 and is essential for its function in clathrin-mediated endocytosis of INSR motif lies at 294-297 (WTKF). Residues 306 to 326 (IIWGIFFILVALLFVISLFLS) form a helical membrane-spanning segment. Topologically, residues 327-364 (NLDKALHSAGIDSGFIIFGANLSNPLNMLLPLLQTVFP) are extracellular. An N-linked (GlcNAc...) asparagine glycan is attached at Asn-347. A helical membrane pass occupies residues 365-385 (LDYILITIIIMYFIFTSMAGI). At 386-408 (RNIGIWFFWIRLYKIRRGRTRPQ) the chain is on the cytoplasmic side. The chain crosses the membrane as a helical span at residues 409–429 (ALLFLCMILLLIVLHTSYMIY). The Extracellular portion of the chain corresponds to 430 to 486 (SLAPQYVMYGSQNYLIETNITSDNHKGNSTLSVPKRCDADAPEDQCTVTRTYLFLHK). Asn-448 and Asn-457 each carry an N-linked (GlcNAc...) asparagine glycan. The helical transmembrane segment at 487 to 507 (FWFFSAAYYFGNWAFLGVFLI) threads the bilayer. Residues 508–540 (GLIVSCCKGKKSVIEGVDEDSDISDDEPSVYSV) are Cytoplasmic-facing. Phosphoserine is present on residues Ser-528 and Ser-531.

The protein belongs to the LIMR family. LMBRD1 subfamily. Interacts with ABCD4; this interaction induces the translocation of ABCD4 from the endoplasmic reticulum to the lysosome. Interacts with ABCD4 and MMACHC; this interaction ensures the transport of cobalamin from the lysosome to the cytoplasm. Interacts with INSR, adapter protein complex 2 and clathrin heavy chain. Post-translationally, N-glycosylated.

The protein localises to the lysosome membrane. The protein resides in the cell membrane. Its subcellular location is the cytoplasmic vesicle. It localises to the clathrin-coated vesicle. In terms of biological role, lysosomal membrane chaperone required to export cobalamin (vitamin B12) from lysosome to the cytosol, allowing its conversion to cofactors. Targets ABCD4 transporter from the endoplasmic reticulum to the lysosomal membrane. Then forms a complex with lysosomal transporter ABCD4 and cytoplasmic MMACHC to transport cobalamin across the lysosomal membrane. Acts as an adapter protein which plays an important role in mediating and regulating the internalization of the insulin receptor (INSR). Involved in clathrin-mediated endocytosis of INSR via its interaction with adapter protein complex 2. Essential for the initiation of gastrulation and early formation of mesoderm structures during embryogenesis. The protein is Lysosomal cobalamin transport escort protein LMBD1 (LMBRD1) of Macaca fascicularis (Crab-eating macaque).